The sequence spans 733 residues: Polyribonucleotide nucleotidyltransferase (733 aa).

Residues D503 and D509 each contribute to the Mg(2+) site. The KH domain maps to 570 to 629; the sequence is PRLTTIQIPVDAIGMVIGKGGETIRSITEETGAEINIDDDGTVTIACSSPEATKAAVETI. Positions 639–713 constitute an S1 motif domain; sequence GTIYMGKVRD…GKTKFALSIK (75 aa).

This sequence belongs to the polyribonucleotide nucleotidyltransferase family. The cofactor is Mg(2+).

It localises to the cytoplasm. The catalysed reaction is RNA(n+1) + phosphate = RNA(n) + a ribonucleoside 5'-diphosphate. Functionally, involved in mRNA degradation. Catalyzes the phosphorolysis of single-stranded polyribonucleotides processively in the 3'- to 5'-direction. This Chlorobaculum tepidum (strain ATCC 49652 / DSM 12025 / NBRC 103806 / TLS) (Chlorobium tepidum) protein is Polyribonucleotide nucleotidyltransferase.